Here is a 231-residue protein sequence, read N- to C-terminus: Ribonuclease 3 (231 aa).

Positions 8–135 (VGDLERRIGH…LMAALYQDGG (128 aa)) constitute an RNase III domain. E48 is a binding site for Mg(2+). Catalysis depends on residues D52 and E124. E124 provides a ligand contact to Mg(2+). One can recognise a DRBM domain in the interval 161–230 (DPKTALQEWA…AKALLEREGA (70 aa)). A disordered region spans residues 210–231 (GKSRQEAEKAAAKALLEREGAG). A compositionally biased stretch (basic and acidic residues) spans 212-231 (SRQEAEKAAAKALLEREGAG).

Belongs to the ribonuclease III family. Homodimer. It depends on Mg(2+) as a cofactor.

It localises to the cytoplasm. The enzyme catalyses Endonucleolytic cleavage to 5'-phosphomonoester.. Functionally, digests double-stranded RNA. Involved in the processing of primary rRNA transcript to yield the immediate precursors to the large and small rRNAs (23S and 16S). Processes some mRNAs, and tRNAs when they are encoded in the rRNA operon. Processes pre-crRNA and tracrRNA of type II CRISPR loci if present in the organism. This chain is Ribonuclease 3, found in Caulobacter vibrioides (strain ATCC 19089 / CIP 103742 / CB 15) (Caulobacter crescentus).